A 330-amino-acid chain; its full sequence is MLSGVQPTGSLHLGNYLGAIRNWVAGQAEYENYFCVVDLHAITVPHDPAELAANTYTVAALYLACGIDPAHATIFVQSHVSAHAELTWLLNCITPLNWLEDMIQFKEKAVKQGENVAAGLLDYPVLMAADILLYDADLVPVGEDQKQHLELTRDIAARVNYLFARNQPPILKLPEPLIPKAGARVMSLTDGTKKMSKSDPSELSRINLLDSPDEIRKKIKRCKTDPIRGLAFDDPDRPEANNLLSLYQVLTGKTKEAVAAECADMGWGQFKPLLTDAVIATLEPIQQRYNEIMADPSYLKDLLKKGQEQAATVANATLERVKLAFGFTLP.

Residues 6 to 8 and 14 to 15 contribute to the ATP site; these read QPT and GN. Residues 7-15 carry the 'HIGH' region motif; that stretch reads PTGSLHLGN. Residue aspartate 130 coordinates L-tryptophan. Residues 142-144, valine 185, and 194-198 each bind ATP; these read GED and KMSKS. A 'KMSKS' region motif is present at residues 194-198; it reads KMSKS.

The protein belongs to the class-I aminoacyl-tRNA synthetase family. Homodimer.

It localises to the cytoplasm. The enzyme catalyses tRNA(Trp) + L-tryptophan + ATP = L-tryptophyl-tRNA(Trp) + AMP + diphosphate + H(+). In terms of biological role, catalyzes the attachment of tryptophan to tRNA(Trp). The polypeptide is Tryptophan--tRNA ligase (Thermosynechococcus vestitus (strain NIES-2133 / IAM M-273 / BP-1)).